A 776-amino-acid chain; its full sequence is Bifunctional lysine-specific demethylase and histidyl-hydroxylase NO66 (776 aa).

Disordered regions lie at residues 1–57 (MGKK…EPKF), 87–126 (EQNG…AHKH), and 165–288 (ILDE…DDEG). 2 stretches are compositionally biased toward basic and acidic residues: residues 47 to 57 (HYKEPSKEPKF) and 98 to 119 (EISP…DGVA). Acidic residues predominate over residues 166–204 (LDEEVEDEEIDEEEFEDEEEVEDEEGMDEDETEIDESEM). Over residues 206–216 (VDPKDIERCIE) the composition is skewed to basic and acidic residues. Residues 217–288 (FEDVDDEDEM…EMDADSDDEG (72 aa)) are compositionally biased toward acidic residues. Positions 425-569 (QLVNPQTFDD…NLMEKVIPEA (145 aa)) constitute a JmjC domain. The Fe cation site is built by histidine 468, aspartate 470, and histidine 535.

It belongs to the ROX family. NO66 subfamily. The cofactor is Fe(2+).

The protein resides in the nucleus. It catalyses the reaction N(6),N(6)-dimethyl-L-lysyl(36)-[histone H3] + 2 2-oxoglutarate + 2 O2 = L-lysyl(36)-[histone H3] + 2 formaldehyde + 2 succinate + 2 CO2. Oxygenase that can act as both a histone lysine demethylase and a ribosomal histidine hydroxylase. Specifically demethylates 'Lys-4' (H3K4me) and 'Lys-36' (H3K36me) of histone H3, thereby playing a central role in histone code. This Caenorhabditis briggsae protein is Bifunctional lysine-specific demethylase and histidyl-hydroxylase NO66 (jmjc-1).